We begin with the raw amino-acid sequence, 157 residues long: Protein E6 (157 aa).

Zinc fingers lie at residues 41-77 (CNFC…CRVC) and 114-150 (CQTC…CRQC).

Belongs to the papillomaviridae E6 protein family. Forms homodimers. Interacts with ubiquitin-protein ligase UBE3A/E6-AP; this interaction stimulates UBE3A ubiquitin activity. Interacts with host BAK1.

It localises to the host cytoplasm. The protein localises to the host nucleus. In terms of biological role, plays a major role in the induction and maintenance of cellular transformation. E6 associates with host UBE3A/E6-AP ubiquitin-protein ligase and modulates its activity. Protects host keratinocytes from apoptosis by mediating the degradation of host BAK1. May also inhibit host immune response. This is Protein E6 from Human papillomavirus 36.